Reading from the N-terminus, the 113-residue chain is Ribosome-binding factor A (113 aa).

This sequence belongs to the RbfA family. As to quaternary structure, monomer. Binds 30S ribosomal subunits, but not 50S ribosomal subunits or 70S ribosomes.

It is found in the cytoplasm. Functionally, one of several proteins that assist in the late maturation steps of the functional core of the 30S ribosomal subunit. Associates with free 30S ribosomal subunits (but not with 30S subunits that are part of 70S ribosomes or polysomes). Required for efficient processing of 16S rRNA. May interact with the 5'-terminal helix region of 16S rRNA. The chain is Ribosome-binding factor A from Mycoplasmopsis agalactiae (strain NCTC 10123 / CIP 59.7 / PG2) (Mycoplasma agalactiae).